A 9904-amino-acid polypeptide reads, in one-letter code: Extracellular matrix-binding protein ebh (9904 aa).

A signal peptide spans 1–39; sequence MNYRDKIQKFSIRKYTVGTFSTVIATLVFLGFNTSQAHA. Positions 41–59 are enriched in polar residues; that stretch reads ETNQPASVVKQKQQSNNEQ. 2 disordered regions span residues 41–153 and 250–277; these read ETNQ…NDNR and PQRQ…PRSV. Over residues 65-78 the composition is skewed to low complexity; the sequence is SQVQNSQNSQNSQS. Polar residues predominate over residues 79–117; that stretch reads LSATHENEQPNISQANLVDQKVAQSSTTNDEQPASQNVN. A compositionally biased stretch (basic and acidic residues) spans 130 to 140; it reads PDKEEGKHKQN. 2 stretches are compositionally biased toward polar residues: residues 141 to 151 and 250 to 266; these read ESQSANKNGND and PQRQ…QTRS. FIVAR domains follow at residues 2524–2580, 2610–2666, 2687–2750, 2780–2836, 2864–2919, 2947–3002, 3030–3085, 3154–3212, 3280–3339, 3407–3465, 3533–3591, 3659–3717, 3785–3843, 3911–3969, 4037–4095, 4160–4208, 4276–4334, 4402–4460, 4528–4586, 4654–4712, 4780–4838, 4906–4964, 5032–5090, 5158–5216, 5284–5342, 5410–5468, 5536–5593, 5661–5719, 5787–5845, 5913–5971, 6039–6097, 6175–6223, 6291–6349, 6417–6475, 6543–6601, 6669–6727, 6795–6853, 6921–6979, 7047–7105, 7173–7231, 7299–7357, 7425–7486, 7551–7609, 7677–7735, 7803–7860, 7928–7986, 8054–8112, 8180–8238, 8306–8364, 8432–8490, 8558–8612, 8680–8739, and 8934–8990; these read AKNH…VSDA, SKNN…ISEE, DTHT…VQTA, AKTK…IAEE, AKTQ…IRQN, AKNQ…INTN, AKTQ…INDK, AMTK…VNQK, AMTG…VNNA, AMGN…VNRA, AMGN…VTEA, AMNT…ITQK, AMAS…VEAA, AMGN…VEQA, AMGT…VTAA, DKDA…VDNA, AMGA…INGM, AMTA…VNSA, AMKG…ITQA, AMHS…VEQA, AMGQ…VERA, AMTA…VTNA, AMKG…INQA, AMTN…VESA, AMSN…VEQA, AMNQ…INQK, AMGN…VQAA, AMGQ…VEAA, AMQR…VEQA, AMDQ…VTAA, AMNQ…VTQA, DKDQ…VEAA, AMGN…VEAA, AMDK…INQA, AMTQ…ITAA, AMTQ…IQQA, AMTN…VEQA, AMTQ…VAQA, AMGT…VTQA, AMGN…ITRA, AMDQ…ITNE, AMEL…VNGA, AMHG…INQA, LMDA…VSSA, AIKA…IDQA, AMEA…VEQL, AMQA…VEQL, AMET…VEQA, SMDQ…VDQA, AMDQ…VIKL, and AMET…INGA. The chain crosses the membrane as a helical span at residues 9710-9730; that stretch reads IKNAIGVVGISGLLASFWFFI. The disordered stretch occupies residues 9807 to 9904; sequence RRKEDEEDVE…KKKKSKKNKK (98 aa). Basic and acidic residues-rich tracts occupy residues 9822–9832 and 9871–9881; these read TDEKVLKDNEH and QKDNQSKDKKS. Residues 9886 to 9904 are compositionally biased toward basic residues; it reads TSKKVAAKKKKKKSKKNKK.

It localises to the cell membrane. The polypeptide is Extracellular matrix-binding protein ebh (ebh) (Staphylococcus aureus (strain MW2)).